We begin with the raw amino-acid sequence, 546 residues long: Phosphoglucomutase (546 aa).

S135 (phosphoserine intermediate) is an active-site residue. Mg(2+) contacts are provided by S135, D288, D290, and D292.

This sequence belongs to the phosphohexose mutase family. Mg(2+) serves as cofactor.

It carries out the reaction alpha-D-glucose 1-phosphate = alpha-D-glucose 6-phosphate. It participates in glycolipid metabolism; diglucosyl-diacylglycerol biosynthesis. Catalyzes the interconversion between glucose-6-phosphate and alpha-glucose-1-phosphate. This is the first step in the biosynthesis of diglucosyl-diacylglycerol (Glc2-DAG), i.e. a glycolipid found in the membrane, which is also used as a membrane anchor for lipoteichoic acid (LTA). This Staphylococcus epidermidis (strain ATCC 35984 / DSM 28319 / BCRC 17069 / CCUG 31568 / BM 3577 / RP62A) protein is Phosphoglucomutase (pgcA).